The primary structure comprises 190 residues: Pyridoxal 5'-phosphate synthase subunit PdxT (190 aa).

Residue 46-48 (GES) coordinates L-glutamine. The active-site Nucleophile is cysteine 78. Residues arginine 108 and 137–138 (IR) each bind L-glutamine. Catalysis depends on charge relay system residues histidine 174 and glutamate 176.

It belongs to the glutaminase PdxT/SNO family. In the presence of PdxS, forms a dodecamer of heterodimers. Only shows activity in the heterodimer.

It carries out the reaction aldehydo-D-ribose 5-phosphate + D-glyceraldehyde 3-phosphate + L-glutamine = pyridoxal 5'-phosphate + L-glutamate + phosphate + 3 H2O + H(+). The enzyme catalyses L-glutamine + H2O = L-glutamate + NH4(+). It functions in the pathway cofactor biosynthesis; pyridoxal 5'-phosphate biosynthesis. In terms of biological role, catalyzes the hydrolysis of glutamine to glutamate and ammonia as part of the biosynthesis of pyridoxal 5'-phosphate. The resulting ammonia molecule is channeled to the active site of PdxS. The sequence is that of Pyridoxal 5'-phosphate synthase subunit PdxT from Chloroflexus aurantiacus (strain ATCC 29366 / DSM 635 / J-10-fl).